The following is a 1402-amino-acid chain: DNA-directed RNA polymerase subunit beta' (1402 aa).

Residues C70, C72, C85, and C88 each contribute to the Zn(2+) site. The Mg(2+) site is built by D460, D462, and D464. Residues C812, C886, C893, and C896 each contribute to the Zn(2+) site. The disordered stretch occupies residues 1373 to 1402 (DRFLNGSASSNEKSRSAGVLEATDEESAGD).

This sequence belongs to the RNA polymerase beta' chain family. The RNAP catalytic core consists of 2 alpha, 1 beta, 1 beta' and 1 omega subunit. When a sigma factor is associated with the core the holoenzyme is formed, which can initiate transcription. The cofactor is Mg(2+). Zn(2+) is required as a cofactor.

The catalysed reaction is RNA(n) + a ribonucleoside 5'-triphosphate = RNA(n+1) + diphosphate. Its function is as follows. DNA-dependent RNA polymerase catalyzes the transcription of DNA into RNA using the four ribonucleoside triphosphates as substrates. This is DNA-directed RNA polymerase subunit beta' from Dichelobacter nodosus (strain VCS1703A).